Reading from the N-terminus, the 101-residue chain is MMFEHVLFLSVYLFSIGIYGLITSRNMVRALICLELILNSINLNLVTFSDLFDSRQLKGDIFAIFVIALAAAEAAIGLSILSSIHRNRKSTRINQSNFLNN.

3 helical membrane-spanning segments follow: residues 2–22, 32–52, and 61–81; these read MFEH…YGLI, ICLE…SDLF, and IFAI…LSIL.

It belongs to the complex I subunit 4L family. NDH is composed of at least 16 different subunits, 5 of which are encoded in the nucleus.

The protein resides in the plastid. It is found in the chloroplast thylakoid membrane. It catalyses the reaction a plastoquinone + NADH + (n+1) H(+)(in) = a plastoquinol + NAD(+) + n H(+)(out). The catalysed reaction is a plastoquinone + NADPH + (n+1) H(+)(in) = a plastoquinol + NADP(+) + n H(+)(out). In terms of biological role, NDH shuttles electrons from NAD(P)H:plastoquinone, via FMN and iron-sulfur (Fe-S) centers, to quinones in the photosynthetic chain and possibly in a chloroplast respiratory chain. The immediate electron acceptor for the enzyme in this species is believed to be plastoquinone. Couples the redox reaction to proton translocation, and thus conserves the redox energy in a proton gradient. The protein is NAD(P)H-quinone oxidoreductase subunit 4L, chloroplastic of Oryza nivara (Indian wild rice).